The sequence spans 501 residues: Putative zinc metalloprotease TM_0890 (501 aa).

Residue histidine 17 participates in Zn(2+) binding. The active site involves glutamate 18. Histidine 21 is a binding site for Zn(2+). A run of 4 helical transmembrane segments spans residues 93-115 (FLIT…LPIT), 401-420 (VQTG…SAAS), 427-449 (VLTV…LPAL), and 474-496 (IIHF…LDIG). The 85-residue stretch at 96–180 (TLAGPLFSIL…LVIIRNGEKK (85 aa)) folds into the PDZ domain.

The protein belongs to the peptidase M50B family. Zn(2+) serves as cofactor.

It localises to the cell inner membrane. The sequence is that of Putative zinc metalloprotease TM_0890 from Thermotoga maritima (strain ATCC 43589 / DSM 3109 / JCM 10099 / NBRC 100826 / MSB8).